The sequence spans 521 residues: Spermidine transporter DUR31 (521 aa).

The chain crosses the membrane as a helical span at residues 11 to 31 (AIIYLSYAFMLATGLFLAWKF). N-linked (GlcNAc...) asparagine glycosylation is present at N41. Transmembrane regions (helical) follow at residues 47–67 (IPLA…TTYA), 79–99 (LVYT…GPVI), 117–137 (FGMV…FLFM), 156–176 (ALGA…FGGF), 187–207 (GVCV…YIEI), 227–247 (LVYI…GFWL), 264–284 (IAAF…FLAV), 310–330 (WLVA…FDSL), 354–374 (IMLI…ADNI), 377–397 (IYLI…LGLA), 406–426 (GFDV…FGTV), and 453–473 (FGAF…SAAL).

Belongs to the sodium:solute symporter (SSF) (TC 2.A.21) family.

It is found in the membrane. It catalyses the reaction spermidine(in) = spermidine(out). Functionally, spermidine transporter that is also used by salivary gland-secreted histatin 5 (Hst 5) to enter into candidal cells. A major component of host nonimmune defense systems is salivary histatins, a family of small (3-4 kDa), histidine-rich, cationic proteins secreted by major salivary glands in humans and higher primates. Hst 5 is the most potent of the 12 histatin family members and has fungicidal activity against blastoconidial and filamentous forms of Candida albicans. DUR31 only functions under high concentrations of Hst 5. Hst 5 cojugates to spermidine to be uptaken by DUR31. This is Spermidine transporter DUR31 from Candida albicans (strain SC5314 / ATCC MYA-2876) (Yeast).